Reading from the N-terminus, the 297-residue chain is N-acetylneuraminate lyase (297 aa).

The aceneuramate site is built by Ser-47 and Thr-48. Tyr-137 serves as the catalytic Proton donor. Lys-165 acts as the Schiff-base intermediate with substrate in catalysis. 5 residues coordinate aceneuramate: Thr-167, Gly-189, Asp-191, Glu-192, and Ser-208.

Belongs to the DapA family. NanA subfamily. As to quaternary structure, homotetramer.

It is found in the cytoplasm. The catalysed reaction is aceneuramate = aldehydo-N-acetyl-D-mannosamine + pyruvate. The protein operates within amino-sugar metabolism; N-acetylneuraminate degradation; D-fructose 6-phosphate from N-acetylneuraminate: step 1/5. Catalyzes the reversible aldol cleavage of N-acetylneuraminic acid (sialic acid; Neu5Ac) to form pyruvate and N-acetylmannosamine (ManNAc) via a Schiff base intermediate. The polypeptide is N-acetylneuraminate lyase (Escherichia fergusonii (strain ATCC 35469 / DSM 13698 / CCUG 18766 / IAM 14443 / JCM 21226 / LMG 7866 / NBRC 102419 / NCTC 12128 / CDC 0568-73)).